Reading from the N-terminus, the 341-residue chain is Anthranilate phosphoribosyltransferase (341 aa).

5-phospho-alpha-D-ribose 1-diphosphate is bound by residues Gly82, 85–86, Thr90, 92–95, 110–118, and Ser122; these read GD, NIST, and KHGGRSVSS. Gly82 contacts anthranilate. A Mg(2+)-binding site is contributed by Ser94. Arg168 contacts anthranilate. Residues Asp227 and Glu228 each contribute to the Mg(2+) site.

Belongs to the anthranilate phosphoribosyltransferase family. As to quaternary structure, homodimer. It depends on Mg(2+) as a cofactor.

It catalyses the reaction N-(5-phospho-beta-D-ribosyl)anthranilate + diphosphate = 5-phospho-alpha-D-ribose 1-diphosphate + anthranilate. The protein operates within amino-acid biosynthesis; L-tryptophan biosynthesis; L-tryptophan from chorismate: step 2/5. In terms of biological role, catalyzes the transfer of the phosphoribosyl group of 5-phosphorylribose-1-pyrophosphate (PRPP) to anthranilate to yield N-(5'-phosphoribosyl)-anthranilate (PRA). The chain is Anthranilate phosphoribosyltransferase from Nitrosomonas eutropha (strain DSM 101675 / C91 / Nm57).